The primary structure comprises 219 residues: Ribosomal RNA small subunit methyltransferase G (219 aa).

S-adenosyl-L-methionine is bound by residues G85, L90, 136–137 (VE), and R151.

Belongs to the methyltransferase superfamily. RNA methyltransferase RsmG family.

It localises to the cytoplasm. It catalyses the reaction guanosine(527) in 16S rRNA + S-adenosyl-L-methionine = N(7)-methylguanosine(527) in 16S rRNA + S-adenosyl-L-homocysteine. Functionally, specifically methylates the N7 position of guanine in position 527 of 16S rRNA. The polypeptide is Ribosomal RNA small subunit methyltransferase G (Cellvibrio japonicus (strain Ueda107) (Pseudomonas fluorescens subsp. cellulosa)).